Consider the following 205-residue polypeptide: Ephrin-A1 (205 aa).

Positions 1 to 18 are cleaved as a signal peptide; that stretch reads MEFLWAPLLGLCCSLAAA. The Ephrin RBD domain maps to 19-151; it reads DRHTVFWNSS…KLKVTVSGKI (133 aa). Asn-26 carries an N-linked (GlcNAc...) asparagine glycan. Disulfide bonds link Cys-51-Cys-92 and Cys-80-Cys-140. Ser-182 is lipidated: GPI-anchor amidated serine. A propeptide spans 183–205 (removed in mature form); that stretch reads AAPRLSPLAWAVLLLPFLLLQTS.

Belongs to the ephrin family. Monomer. Homodimer. Forms heterodimers with EPHA2. Binds to the receptor tyrosine kinases EPHA2, EPHA3, EPHA4, EPHA5, EPHA6 and EPHA7. Also binds with low affinity to EPHA1. In terms of processing, undergoes proteolysis by a metalloprotease to give rise to a soluble monomeric form. Post-translationally, N-Glycosylation is required for binding to EPHA2 receptor and inducing its internalization.

It is found in the cell membrane. The protein localises to the secreted. Its function is as follows. Cell surface GPI-bound ligand for Eph receptors, a family of receptor tyrosine kinases which are crucial for migration, repulsion and adhesion during neuronal, vascular and epithelial development. Binds promiscuously Eph receptors residing on adjacent cells, leading to contact-dependent bidirectional signaling into neighboring cells. Plays an important role in angiogenesis and tumor neovascularization. The recruitment of VAV2, VAV3 and PI3-kinase p85 subunit by phosphorylated EPHA2 is critical for EFNA1-induced RAC1 GTPase activation and vascular endothelial cell migration and assembly. Exerts anti-oncogenic effects in tumor cells through activation and down-regulation of EPHA2. Activates EPHA2 by inducing tyrosine phosphorylation which leads to its internalization and degradation. Acts as a negative regulator in the tumorigenesis of gliomas by down-regulating EPHA2 and FAK. Can evoke collapse of embryonic neuronal growth cone and regulates dendritic spine morphogenesis. This Sus scrofa (Pig) protein is Ephrin-A1 (EFNA1).